The sequence spans 370 residues: Alanine racemase (370 aa).

Lys-39 functions as the Proton acceptor; specific for D-alanine in the catalytic mechanism. N6-(pyridoxal phosphate)lysine is present on Lys-39. Arg-137 is a binding site for substrate. The active-site Proton acceptor; specific for L-alanine is the Tyr-258. Met-306 serves as a coordination point for substrate.

The protein belongs to the alanine racemase family. Pyridoxal 5'-phosphate serves as cofactor.

It catalyses the reaction L-alanine = D-alanine. Its pathway is amino-acid biosynthesis; D-alanine biosynthesis; D-alanine from L-alanine: step 1/1. Its function is as follows. Catalyzes the interconversion of L-alanine and D-alanine. May also act on other amino acids. In Methylobacterium nodulans (strain LMG 21967 / CNCM I-2342 / ORS 2060), this protein is Alanine racemase (alr).